The sequence spans 331 residues: Protein MGF 300-4L (331 aa).

Belongs to the asfivirus MGF 300 family.

In African swine fever virus (isolate Tick/Malawi/Lil 20-1/1983) (ASFV), this protein is Protein MGF 300-4L.